Consider the following 194-residue polypeptide: Cation channel sperm-associated auxiliary subunit zeta (194 aa).

As to quaternary structure, component of the CatSper complex or CatSpermasome composed of the core pore-forming members CATSPER1, CATSPER2, CATSPER3 and CATSPER4 as well as auxiliary members CATSPERB, CATSPERG2, CATSPERD, CATSPERE, CATSPERZ, C2CD6/CATSPERT, SLCO6C1, TMEM249, TMEM262 and EFCAB9. HSPA1 may be an additional auxiliary complex member. The core complex members CATSPER1, CATSPER2, CATSPER3 and CATSPER4 form a heterotetrameric channel. The auxiliary CATSPERB, CATSPERG2, CATSPERD and CATSPERE subunits form a pavilion-like structure over the pore which stabilizes the complex through interactions with CATSPER4, CATSPER3, CATSPER1 and CATSPER2 respectively. SLCO6C1 interacts with CATSPERE and TMEM262/CATSPERH interacts with CATSPERB, further stabilizing the complex. C2CD6/CATSPERT interacts at least with CATSPERD and is required for targeting the CatSper complex in the flagellar membrane. Interacts with EFCAB9; the interaction is direct, Ca(2+)-dependent and connects EFCAB9 with the CatSper complex. Dissociates from EFCAB9 at elevated pH. Testis-specific. Expressed in adult but not in fetal testis. Not expressed in ovary. Within testis, expression is restricted to spermatids.

It localises to the cell projection. It is found in the cilium. The protein resides in the flagellum membrane. Functionally, auxiliary component of the CatSper complex, a complex involved in sperm cell hyperactivation. Sperm cell hyperactivation is needed for sperm motility which is essential late in the preparation of sperm for fertilization. Required for a distribution of the CatSper complex in linear quadrilateral nanodomains along the flagellum, maximizing fertilization inside the mammalian female reproductive tract. Together with EFCAB9, associates with the CatSper channel pore and is required for the two-row structure of each single CatSper channel. The polypeptide is Cation channel sperm-associated auxiliary subunit zeta (Mus musculus (Mouse)).